The following is a 509-amino-acid chain: MAEEQAYHVNKGLECIKSLKASPPDLSTIKDALESWREGLSPSGRATPNPDTSEGDHQNINQSCSPAIGSDKVDMSPEDNLGFREITCNDSEAGLGGVLDKGSNSQVQRYYVYSHGGEEIEGLEDADSLVVQANPPVTDTFNGGEDGSDDSDVDSGPDDPGRDPLYDRGSAAGNDVSRSTDVEKLEGDDIQEVLNSQKSKGGRFQGGKILRVPEIPDVKNSRPSAQSIKKGTDGNSVLSGTVTECSSISGATQAVPESRWESSERNASVGSVPKSARSAKTIQGLTQESGTIASLTQPKENDSEFEYEDDLFTEMQEIRASIAKIHDDNKTILSKLDSLLLLKGEIDTIKKQISKQNISISTIEGHLSSIMIAIPGFGKDIKDPTSEVELNPDLRPIISRDSGRALAEVLKKPAVDRSQKSGIKVNSGSKGQLLKDLQLKPVDKQASSAIEFVPSDHESSRSVIRSIIKSSKLNIDHKDYLLDLLNDVKGSKDLKEFHKMLTAILAKQP.

Disordered regions lie at residues 33 to 84 (LESW…LGFR), 131 to 236 (VQAN…DGNS), and 256 to 281 (PESR…SAKT). Residues 44-65 (GRATPNPDTSEGDHQNINQSCS) show a composition bias toward polar residues. Over residues 146–157 (DGSDDSDVDSGP) the composition is skewed to acidic residues. Residue Ser-151 is modified to Phosphoserine. Positions 178–187 (RSTDVEKLEG) are enriched in basic and acidic residues. Polar residues predominate over residues 221 to 236 (SRPSAQSIKKGTDGNS). The multimerization stretch occupies residues 303-376 (SEFEYEDDLF…LSSIMIAIPG (74 aa)). The segment at 459-509 (SSRSVIRSIIKSSKLNIDHKDYLLDLLNDVKGSKDLKEFHKMLTAILAKQP) is interaction with the nucleocapsid (N-RNA).

Belongs to the morbillivirus P protein family. As to quaternary structure, homotetramer. Interacts (via multimerization domain) with polymerase L; this interaction forms the polymerase L-P complex. Interacts (via N-terminus) with N0 (via Ncore); this interaction allows P to chaperon N0 to avoid N polymerization before encapsidation. Interacts (via C-terminus) with N-RNA template; this interaction positions the polymerase on the template for both transcription and replication. Interacts with host ISG15; this interaction disrupts the activity of the N0-P complex. Phosphorylation on serines by host CK2 is necessary for the formation of viral factories.

Its function is as follows. Essential cofactor of the RNA polymerase L that plays a central role in the transcription and replication by forming the polymerase complex with RNA polymerase L and recruiting L to the genomic N-RNA template for RNA synthesis. Also plays a central role in the encapsidation of nascent RNA chains by forming the encapsidation complex with the nucleocapsid protein N (N-P complex). Acts as a chaperone for newly synthesized free N protein, so-called N0, allowing encapsidation of nascent RNA chains during replication. The nucleoprotein protein N prevents excessive phosphorylation of P, which leads to down-regulation of viral transcription/ replication. Participates, together with N, in the formation of viral factories (viroplasms), which are large inclusions in the host cytoplasm where replication takes place. The sequence is that of Phosphoprotein (P/V) from Capra hircus (Goat).